We begin with the raw amino-acid sequence, 969 residues long: RNA polymerase-associated protein RapA (969 aa).

Positions 164–334 constitute a Helicase ATP-binding domain; that stretch reads EVGRRYAPRV…FARLRLLDPD (171 aa). Residue 177-184 participates in ATP binding; sequence DEVGLGKT. Residues 280–283 carry the DEAH box motif; the sequence is DEAH. In terms of domain architecture, Helicase C-terminal spans 492–668; that stretch reads RVNWLLELLK…GKSDGLESLI (177 aa).

The protein belongs to the SNF2/RAD54 helicase family. RapA subfamily. Interacts with the RNAP. Has a higher affinity for the core RNAP than for the holoenzyme. Its ATPase activity is stimulated by binding to RNAP.

Its function is as follows. Transcription regulator that activates transcription by stimulating RNA polymerase (RNAP) recycling in case of stress conditions such as supercoiled DNA or high salt concentrations. Probably acts by releasing the RNAP, when it is trapped or immobilized on tightly supercoiled DNA. Does not activate transcription on linear DNA. Probably not involved in DNA repair. The protein is RNA polymerase-associated protein RapA of Aliivibrio fischeri (strain MJ11) (Vibrio fischeri).